The following is a 147-amino-acid chain: Sec-independent protein translocase protein TatB (147 aa).

The chain crosses the membrane as a helical span at residues 1–21 (MFDVSFTELMVIGVIALVVIG). Residues 67 to 147 (DETARSMQTS…DKTPPTGSAT (81 aa)) are disordered. Residues 93 to 103 (AELDDTARDAS) show a composition bias toward basic and acidic residues. Composition is skewed to low complexity over residues 109–120 (ADAPAEPAPAVA) and 129–147 (APPA…GSAT).

The protein belongs to the TatB family. In terms of assembly, the Tat system comprises two distinct complexes: a TatABC complex, containing multiple copies of TatA, TatB and TatC subunits, and a separate TatA complex, containing only TatA subunits. Substrates initially bind to the TatABC complex, which probably triggers association of the separate TatA complex to form the active translocon.

The protein resides in the cell inner membrane. In terms of biological role, part of the twin-arginine translocation (Tat) system that transports large folded proteins containing a characteristic twin-arginine motif in their signal peptide across membranes. Together with TatC, TatB is part of a receptor directly interacting with Tat signal peptides. TatB may form an oligomeric binding site that transiently accommodates folded Tat precursor proteins before their translocation. The sequence is that of Sec-independent protein translocase protein TatB from Bordetella pertussis (strain Tohama I / ATCC BAA-589 / NCTC 13251).